The chain runs to 372 residues: MKTKNVNLLFALVAVLLFGFSCFCISRMNQTNNQLINCRNHVLEFKETMLRLKNKSENNHQNLVKVLHQLKHKVAPAKPSGSILEKKVNMLDQDETVFNQFEVLKFFLPHLRTAGNIYPDIAIGRQRAGVSFALGITTIDRGNHTYLKQTLTSVLSRMTPEEEEDSVVIVSVADTDENYLKSVVHMVKTRFRKQVQSGALEVISIPALFYPQTLLEKKTTKNAKNWQIKQVLDFCILMLYAQPKATYYLQLEDDIVAKKMYFTKMKDFVNSVTSKDWFYIEFSVLGFIGKLFRSKDLMDFVHFFLIFYRAKPIDVLLDDIALLRMCSFGGPLRSCLQLKREVRVQYKPSLFQHVGTHSSFPGREQHLKDHYY.

The Cytoplasmic portion of the chain corresponds to 1 to 8; that stretch reads MKTKNVNL. A helical; Signal-anchor for type II membrane protein membrane pass occupies residues 9–29; it reads LFALVAVLLFGFSCFCISRMN. Residues 30 to 372 lie on the Lumenal side of the membrane; it reads QTNNQLINCR…REQHLKDHYY (343 aa). 2 N-linked (GlcNAc...) asparagine glycosylation sites follow: N54 and N143.

This sequence belongs to the glycosyltransferase 54 family. In terms of assembly, may self-associate; specifically in the endoplasmic reticulum prior to its translocation to the Golgi. Interacts with MGAT1, MGAT3 and MAN2A2; may interact with MGTA1 specifically in the Golgi. In terms of processing, N-glycosylated. O-glycosylated; further modified with terminal sialic acid residues. As to expression, testis.

It is found in the golgi apparatus membrane. The protein resides in the endoplasmic reticulum membrane. May play a role in male spermatogenesis. In vitro acts as inhibitor of MGAT1 activity causing cell surface proteins to carry mainly high mannose N-glycans. The function is mediated by its lumenal domain and occurs specifically in the Golgi. A catalytic glucosyltransferase activity is not detected. May be involved in regulation of Sertoli-germ cell interactions during specific stages of spermatogenesis. The chain is Alpha-1,3-mannosyl-glycoprotein 4-beta-N-acetylglucosaminyltransferase-like protein MGAT4D from Rattus norvegicus (Rat).